The following is a 217-amino-acid chain: Thymidylate kinase (217 aa).

14–21 (GNEGSGKT) is an ATP binding site.

This sequence belongs to the thymidylate kinase family.

It catalyses the reaction dTMP + ATP = dTDP + ADP. In terms of biological role, phosphorylation of dTMP to form dTDP in both de novo and salvage pathways of dTTP synthesis. The chain is Thymidylate kinase from Orientia tsutsugamushi (strain Ikeda) (Rickettsia tsutsugamushi).